The following is a 231-amino-acid chain: uncharacterized protein (231 aa).

Residue 10-34 (VVTGAGSGIGEAIATLLHEEGAKVV) coordinates NADP(+). Serine 140 is a binding site for substrate. Tyrosine 153 functions as the Proton acceptor in the catalytic mechanism.

This sequence belongs to the short-chain dehydrogenases/reductases (SDR) family.

This is an uncharacterized protein from Staphylococcus aureus (strain MW2).